Reading from the N-terminus, the 127-residue chain is Modulator protein MzrA (127 aa).

Residues Met1–Gln10 lie on the Cytoplasmic side of the membrane. The chain crosses the membrane as a helical span at residues Leu11–Leu31. At Arg32–Gly127 the chain is on the periplasmic side.

This sequence belongs to the MzrA family. In terms of assembly, interacts with EnvZ.

Its subcellular location is the cell inner membrane. In terms of biological role, modulates the activity of the EnvZ/OmpR two-component regulatory system, probably by directly modulating EnvZ enzymatic activity and increasing stability of phosphorylated OmpR. The chain is Modulator protein MzrA from Salmonella agona (strain SL483).